Reading from the N-terminus, the 1710-residue chain is Centrosomal protein of 152 kDa (1710 aa).

Disordered regions lie at residues 1-27 (MSLD…YERE), 39-79 (HDML…NEQM), and 108-139 (NRSK…SKCE). The tract at residues 1–60 (MSLDFGSVALPVQNEDEEYDEEDYEREKELQQLLTDLPHDMLDDDLSSPELQYSDCSEDG) is interaction with PLK4. The segment covering 14-24 (NEDEEYDEEDY) has biased composition (acidic residues). The segment covering 108–123 (NRSKTEDRHPVYHPEE) has biased composition (basic and acidic residues). A coiled-coil region spans residues 234 to 490 (ENMQIIQLQV…ISLYESAAKL (257 aa)). The segment covering 587–604 (DEKSIEVETKTDTSEKPK) has biased composition (basic and acidic residues). A disordered region spans residues 587 to 611 (DEKSIEVETKTDTSEKPKNQLWPES). Coiled coils occupy residues 615 to 664 (DVVR…QDFD), 700 to 772 (EKQQ…LEKE), and 902 to 993 (AVSE…INEV). The interval 1120 to 1142 (ELSKDSASQGTGQGDPGPAAGHH) is disordered. A coiled-coil region spans residues 1170-1241 (HCFQELEKAK…LEELQTLCKT (72 aa)). Threonine 1241 carries the phosphothreonine modification.

The protein belongs to the CEP152 family. Interacts (via N-terminus) with PLK4; the interaction is mutally exclusive with a PLK4:CEP192 interaction. Interacts (via C-terminus) with CPAP (via-N-terminus). Interacts with CINP. Interacts with CDK5RAP2, WDR62, CEP63 and CEP131. CEP63, CDK5RAP2, CEP152, WDR62 are proposed to form a stepwise assembled complex at the centrosome forming a ring near parental centrioles. Interacts with DEUP1; this interaction recruits CEP152 to the deuterosome. The interactions with CEP63 and DEUP1 are mutually exclusive. Interacts with CCDC66.

It localises to the cytoplasm. Its subcellular location is the cytoskeleton. The protein resides in the microtubule organizing center. The protein localises to the centrosome. It is found in the centriole. Its function is as follows. Necessary for centrosome duplication; the function also seems to involve CEP63, CDK5RAP2 and WDR62 through a stepwise assembled complex at the centrosome that recruits CDK2 required for centriole duplication. Acts as a molecular scaffold facilitating the interaction of PLK4 and CPAP, 2 molecules involved in centriole formation. Proposed to snatch PLK4 away from PLK4:CEP92 complexes in early G1 daughter centriole and to reposition PLK4 at the outer boundary of a newly forming CEP152 ring structure. Also plays a key role in deuterosome-mediated centriole amplification in multiciliated that can generate more than 100 centrioles. Overexpression of CEP152 can drive amplification of centrioles. This chain is Centrosomal protein of 152 kDa, found in Homo sapiens (Human).